An 860-amino-acid chain; its full sequence is Rod cGMP-specific 3',5'-cyclic phosphodiesterase subunit alpha (860 aa).

Glycine 2 is modified (N-acetylglycine). GAF domains are found at residues 73 to 222 (QTEK…NLIM) and 254 to 431 (DIER…GWSV). Residues 483 to 816 (EEEELAEILQ…KEWKALADEY (334 aa)) enclose the PDEase domain. The Proton donor role is filled by histidine 559. A divalent metal cation contacts are provided by histidine 563, histidine 599, aspartate 600, and aspartate 720. The tract at residues 821–860 (KVQEEKKQKQQSAKSAAAGNQPGGNPSPGGATTSKSCCIQ) is disordered. A compositionally biased stretch (low complexity) spans 830-851 (QQSAKSAAAGNQPGGNPSPGGA). A Cysteine methyl ester modification is found at cysteine 857. Cysteine 857 is lipidated: S-farnesyl cysteine. The propeptide at 858-860 (CIQ) is removed in mature form.

The protein belongs to the cyclic nucleotide phosphodiesterase family. In terms of assembly, oligomer composed of two catalytic chains (alpha and beta), an inhibitory chain (gamma) and the delta chain. A divalent metal cation serves as cofactor.

Its subcellular location is the cell membrane. The protein resides in the cell projection. It localises to the cilium. The protein localises to the photoreceptor outer segment. The enzyme catalyses 3',5'-cyclic GMP + H2O = GMP + H(+). Functionally, rod-specific cGMP phosphodiesterase that catalyzes the hydrolysis of 3',5'-cyclic GMP. This protein participates in processes of transmission and amplification of the visual signal. The protein is Rod cGMP-specific 3',5'-cyclic phosphodiesterase subunit alpha of Homo sapiens (Human).